Here is a 292-residue protein sequence, read N- to C-terminus: Elongation factor Ts (292 aa).

The involved in Mg(2+) ion dislocation from EF-Tu stretch occupies residues 82–85; it reads TDFV.

This sequence belongs to the EF-Ts family.

The protein localises to the cytoplasm. Functionally, associates with the EF-Tu.GDP complex and induces the exchange of GDP to GTP. It remains bound to the aminoacyl-tRNA.EF-Tu.GTP complex up to the GTP hydrolysis stage on the ribosome. In Bordetella parapertussis (strain 12822 / ATCC BAA-587 / NCTC 13253), this protein is Elongation factor Ts.